Reading from the N-terminus, the 543-residue chain is DM7 family protein GG19680 (543 aa).

The span at glycine 415–serine 430 shows a compositional bias: basic and acidic residues. The disordered stretch occupies residues glycine 415 to glutamine 443.

Belongs to the DM7 family.

In Drosophila erecta (Fruit fly), this protein is DM7 family protein GG19680.